Reading from the N-terminus, the 120-residue chain is Large ribosomal subunit protein uL18c (120 aa).

The protein belongs to the universal ribosomal protein uL18 family. In terms of assembly, part of the 50S ribosomal subunit; contacts the 5S rRNA.

It localises to the plastid. It is found in the chloroplast. Its function is as follows. Binds 5S rRNA, forms part of the central protuberance of the 50S subunit. This chain is Large ribosomal subunit protein uL18c (rpl18), found in Pyropia yezoensis (Susabi-nori).